A 237-amino-acid polypeptide reads, in one-letter code: Ras-related protein Rab-33A (237 aa).

GTP is bound by residues asparagine 46, valine 47, glycine 48, lysine 49, threonine 50, cysteine 51, threonine 65, and threonine 68. Position 50 (threonine 50) interacts with Mg(2+). The Switch 1 signature appears at 59–71 (GTFPDKTEATIGV). 2 residues coordinate Mg(2+): threonine 68 and aspartate 91. Residues 92–111 (TAGQERFRKSMVEHYYRNVH) carry the Switch 2 motif. Glycine 94, asparagine 151, lysine 152, aspartate 154, alanine 182, and lysine 183 together coordinate GTP. 2 S-geranylgeranyl cysteine lipidation sites follow: cysteine 235 and cysteine 237. Cysteine methyl ester is present on cysteine 237.

This sequence belongs to the small GTPase superfamily. Rab family. As to quaternary structure, interacts with ATG16L1; the interaction is important for autophagosome formation. Mg(2+) is required as a cofactor. Expressed predominantly in brain. Weak expression in ovary.

It localises to the cell membrane. The enzyme catalyses GTP + H2O = GDP + phosphate + H(+). Regulated by guanine nucleotide exchange factors (GEFs) which promote the exchange of bound GDP for free GTP. Regulated by GTPase activating proteins (GAPs) which increase the GTP hydrolysis activity. Inhibited by GDP dissociation inhibitors (GDIs). Its function is as follows. The small GTPases Rab are key regulators of intracellular membrane trafficking, from the formation of transport vesicles to their fusion with membranes. Rabs cycle between an inactive GDP-bound form and an active GTP-bound form that is able to recruit to membranes different sets of downstream effectors directly responsible for vesicle formation, movement, tethering and fusion. Modulates autophagosome formation through interaction with ATG16L1. In Mus musculus (Mouse), this protein is Ras-related protein Rab-33A.